A 101-amino-acid chain; its full sequence is Putative pterin-4-alpha-carbinolamine dehydratase (101 aa).

It belongs to the pterin-4-alpha-carbinolamine dehydratase family.

It carries out the reaction (4aS,6R)-4a-hydroxy-L-erythro-5,6,7,8-tetrahydrobiopterin = (6R)-L-erythro-6,7-dihydrobiopterin + H2O. This chain is Putative pterin-4-alpha-carbinolamine dehydratase, found in Rhizobium rhizogenes (strain K84 / ATCC BAA-868) (Agrobacterium radiobacter).